Consider the following 892-residue polypeptide: Zinc finger protein 512B (892 aa).

Residues Met1 to Gln82 form a disordered region. The span at Gly8–Gly19 shows a compositional bias: low complexity. The segment at Val105–Cys129 adopts a C2H2-type 1; atypical zinc-finger fold. The C2H2-type 2 zinc-finger motif lies at Phe140–His163. Disordered regions lie at residues Met323–Val473 and Glu562–Glu582. Over residues Ser371–Thr384 the composition is skewed to polar residues. The span at Ser385–Gly398 shows a compositional bias: low complexity. Ser409 carries the phosphoserine modification. Residues Thr418–Lys428 show a composition bias toward basic residues. A NuRD interaction motif motif is present at residues Arg421–Pro427. The C2H2-type 3 zinc finger occupies Leu540–His563. Residues Leu594–Cys618 form a C2H2-type 4; atypical zinc finger. The segment at Phe630–His653 adopts a C2H2-type 5 zinc-finger fold. The disordered stretch occupies residues Val649 to Val682. Ser686 carries the phosphoserine modification. The C2H2-type 6; atypical zinc-finger motif lies at Val750–Cys774. Residues Tyr784–His807 form a C2H2-type 7 zinc finger. The disordered stretch occupies residues Phe812–Lys892. A compositionally biased stretch (basic and acidic residues) spans Pro819–Lys831. A compositionally biased stretch (basic residues) spans Lys832–Lys849. Residues Glu850–Ala876 show a composition bias toward basic and acidic residues.

The protein belongs to the krueppel C2H2-type zinc-finger protein family. As to quaternary structure, interacts (via its NuRD interaction motif) with RBBP4 of the nucleosome remodeling and deacetylase (NuRD) complex; the interaction is direct and may play a role in repressing gene expression.

The protein localises to the nucleus. Functionally, involved in transcriptional regulation by repressing gene expression. Associates with the nucleosome remodeling and histone deacetylase (NuRD) complex, which promotes transcriptional repression by histone deacetylation and nucleosome remodeling. The sequence is that of Zinc finger protein 512B (ZNF512B) from Homo sapiens (Human).